A 1806-amino-acid polypeptide reads, in one-letter code: Atrochrysone carboxylic acid synthase (1806 aa).

The segment at 30–283 (DLQGLFRRLY…SLPVYSGLCH (254 aa)) is N-terminal acylcarrier protein transacylase domain (SAT). The 435-residue stretch at 416-850 (QSKIAIIGMS…GGNTTVCLEE (435 aa)) folds into the Ketosynthase family 3 (KS3) domain. Residues cysteine 589, histidine 725, and histidine 768 each act as for beta-ketoacyl synthase activity in the active site. A malonyl-CoA:ACP transacylase (MAT) domain region spans residues 951 to 1270 (FAFTGQGASY…SLTALHCAGV (320 aa)). Residues 1340 to 1659 (TSTVQQIIEE…RILLNRFFTA (320 aa)) form a product template (PT) domain region. Positions 1344–1479 (QQIIEESFNG…ASILYDDAAL (136 aa)) are N-terminal hotdog fold. A PKS/mFAS DH domain is found at 1344–1654 (QQIIEESFNG…FRRYPRILLN (311 aa)). Histidine 1376 serves as the catalytic Proton acceptor; for dehydratase activity. Positions 1506 to 1654 (IANRFTRNMA…FRRYPRILLN (149 aa)) are C-terminal hotdog fold. Aspartate 1565 serves as the catalytic Proton donor; for dehydratase activity. The segment at 1668-1726 (HAAASSTPAPRTKPEPVPVATPATAAAPVAQSPAAPASVTPAPAPAPAPGPTPAAAPAA) is disordered. The span at 1685–1708 (PVATPATAAAPVAQSPAAPASVTP) shows a compositional bias: low complexity. The span at 1709–1721 (APAPAPAPGPTPA) shows a compositional bias: pro residues. The region spanning 1728–1805 (GESDSVAAKA…DLRSWLLEYY (78 aa)) is the Carrier domain. Serine 1765 bears the O-(pantetheine 4'-phosphoryl)serine mark.

The enzyme catalyses holo-[ACP] + 8 malonyl-CoA + 8 H(+) = atrochrysone carboxyl-[ACP] + 8 CO2 + 8 CoA + 2 H2O. The protein operates within secondary metabolite biosynthesis. Its function is as follows. Atrochrysone carboxylic acid synthase; part of the gene cluster that mediates the biosynthesis of monodictyphenone, a prenyl xanthone derivative. The pathway begins with the synthesis of atrochrysone thioester by the polyketide synthase (PKS) mdpG. The atrochrysone carboxyl ACP thioesterase mdpF then breaks the thioester bond and releases the atrochrysone carboxylic acid from mdpG. The atrochrysone carboxylic acid is then converted to atrochrysone which is further transformed into emodin anthrone. The next step is performed by the anthrone oxygenase mdpH that catalyzes the oxidation of emodinanthrone to emodin. Emodin is further modified to yield monodictyphenone via several steps involving mdpB, mdpC mdpJ, mdpK and mdpL. The short chain dehydrogenase mdpC converts the tautomers of emodin hydroquinone into the 3-hydroxy-3,4-dihydroan-thracen-1(2H)-one derivative. These enzymes with xptA, xptB and xptC are also proposed to be involved in the synthesis of shamixanthone from emodin. Especially, direct reduction of emodin by the short chain dehydrogenase mdpC followed by dehydration catalyzed by the scytalone dehydratase-like protein mdpB gives loss of oxygen and formation of chrysophanol intermediate in two simple steps. This is Atrochrysone carboxylic acid synthase from Emericella nidulans (strain FGSC A4 / ATCC 38163 / CBS 112.46 / NRRL 194 / M139) (Aspergillus nidulans).